The chain runs to 205 residues: Interleukin-6 (205 aa).

The signal sequence occupies residues 1–21; it reads RFTSAFSLGLLLVTATAFPTP. The cysteines at positions 64 and 70 are disulfide-linked. Serine 73 is subject to Phosphoserine. A disulfide bridge connects residues cysteine 93 and cysteine 103. Asparagine 164 carries N-linked (GlcNAc...) asparagine glycosylation.

It belongs to the IL-6 superfamily. Component of a hexamer of two molecules each of IL6, IL6R and IL6ST; first binds to IL6R to associate with the signaling subunit IL6ST. Interacts with IL6R (via the N-terminal ectodomain); this interaction may be affected by IL6R-binding with SORL1, hence decreasing IL6 cis signaling. Interacts with SORL1 (via the N-terminal ectodomain); this interaction leads to IL6 internalization and lysosomal degradation. May form a trimeric complex with the soluble SORL1 ectodomain and soluble IL6R receptor; this interaction might stabilize circulating IL6, hence promoting IL6 trans signaling.

Its subcellular location is the secreted. Cytokine with a wide variety of biological functions in immunity, tissue regeneration, and metabolism. Binds to IL6R, then the complex associates to the signaling subunit IL6ST/gp130 to trigger the intracellular IL6-signaling pathway. The interaction with the membrane-bound IL6R and IL6ST stimulates 'classic signaling', whereas the binding of IL6 and soluble IL6R to IL6ST stimulates 'trans-signaling'. Alternatively, 'cluster signaling' occurs when membrane-bound IL6:IL6R complexes on transmitter cells activate IL6ST receptors on neighboring receiver cells. Functionally, IL6 is a potent inducer of the acute phase response. Rapid production of IL6 contributes to host defense during infection and tissue injury, but excessive IL6 synthesis is involved in disease pathology. In the innate immune response, is synthesized by myeloid cells, such as macrophages and dendritic cells, upon recognition of pathogens through toll-like receptors (TLRs) at the site of infection or tissue injury. In the adaptive immune response, is required for the differentiation of B cells into immunoglobulin-secreting cells. Plays a major role in the differentiation of CD4(+) T cell subsets. Essential factor for the development of T follicular helper (Tfh) cells that are required for the induction of germinal-center formation. Required to drive naive CD4(+) T cells to the Th17 lineage. Also required for proliferation of myeloma cells and the survival of plasmablast cells. In terms of biological role, acts as an essential factor in bone homeostasis and on vessels directly or indirectly by induction of VEGF, resulting in increased angiogenesis activity and vascular permeability. Induces, through 'trans-signaling' and synergistically with IL1B and TNF, the production of VEGF. Involved in metabolic controls, is discharged into the bloodstream after muscle contraction increasing lipolysis and improving insulin resistance. 'Trans-signaling' in central nervous system also regulates energy and glucose homeostasis. Mediates, through GLP-1, crosstalk between insulin-sensitive tissues, intestinal L cells and pancreatic islets to adapt to changes in insulin demand. Also acts as a myokine. Plays a protective role during liver injury, being required for maintenance of tissue regeneration. Also has a pivotal role in iron metabolism by regulating HAMP/hepcidin expression upon inflammation or bacterial infection. Through activation of IL6ST-YAP-NOTCH pathway, induces inflammation-induced epithelial regeneration. The sequence is that of Interleukin-6 (IL6) from Orcinus orca (Killer whale).